The chain runs to 188 residues: Adenine phosphoribosyltransferase (188 aa).

Belongs to the purine/pyrimidine phosphoribosyltransferase family. As to quaternary structure, homodimer.

It localises to the cytoplasm. It catalyses the reaction AMP + diphosphate = 5-phospho-alpha-D-ribose 1-diphosphate + adenine. Its pathway is purine metabolism; AMP biosynthesis via salvage pathway; AMP from adenine: step 1/1. In terms of biological role, catalyzes a salvage reaction resulting in the formation of AMP, that is energically less costly than de novo synthesis. The sequence is that of Adenine phosphoribosyltransferase from Burkholderia cenocepacia (strain HI2424).